A 306-amino-acid polypeptide reads, in one-letter code: Putative S-adenosyl-L-methionine-dependent methyltransferase FRAAL5401 (306 aa).

Residues Asp-126 and 155 to 156 contribute to the S-adenosyl-L-methionine site; that span reads DL. A disordered region spans residues 201–225; sequence LSAPESRVATENRPNPKPGDEDRTK.

Belongs to the UPF0677 family.

Exhibits S-adenosyl-L-methionine-dependent methyltransferase activity. The chain is Putative S-adenosyl-L-methionine-dependent methyltransferase FRAAL5401 from Frankia alni (strain DSM 45986 / CECT 9034 / ACN14a).